The chain runs to 600 residues: Baculoviral IAP repeat-containing protein 3 (600 aa).

A BIR 1 repeat occupies 27-94 (ELYRLSTYSA…RKLYPSCNFV (68 aa)). Serine 138 carries the phosphoserine modification. 2 BIR repeats span residues 167–233 (EKAR…CPFL) and 253–320 (HAAR…CEYL). Residues cysteine 290, cysteine 293, histidine 310, and cysteine 317 each contribute to the Zn(2+) site. The 90-residue stretch at 436–525 (EESDDLALIR…ALYRDIFVQQ (90 aa)) folds into the CARD domain. An RING-type zinc finger spans residues 553-588 (CKVCMDREVSIVFIPCGHLVVCKDCAPSLRKCPICR).

The protein belongs to the IAP family. In terms of assembly, interacts with PRSS25; the interaction inhibits apoptotic suppressor activity. The BIR motifs region interacts with TNF receptor associated factors 1 and 2 (TRAF1 and TRAF2) to form a heteromeric complex, which is then recruited to the tumor necrosis factor receptor 2 (TNFR2). Interaction with TRAF2 is required for ubiquitination of IKBKE, degradation of NFKBIA and activation of NF-kappa-B. Interacts with RIP1, RIP2, RIP3, RIP4 and USP19. In terms of processing, auto-ubiquitinated and degraded by the proteasome in apoptotic cells.

The protein localises to the cytoplasm. Its subcellular location is the nucleus. The catalysed reaction is S-ubiquitinyl-[E2 ubiquitin-conjugating enzyme]-L-cysteine + [acceptor protein]-L-lysine = [E2 ubiquitin-conjugating enzyme]-L-cysteine + N(6)-ubiquitinyl-[acceptor protein]-L-lysine.. With respect to regulation, USP19 regulates the stability of BIRC3/c-IAP2 by preventing its ubiquitination. Functionally, multi-functional protein which regulates not only caspases and apoptosis, but also modulates inflammatory signaling and immunity, mitogenic kinase signaling and cell proliferation, as well as cell invasion and metastasis. Acts as an E3 ubiquitin-protein ligase regulating NF-kappa-B signaling and regulates both canonical and non-canonical NF-kappa-B signaling by acting in opposite directions: acts as a positive regulator of the canonical pathway and suppresses constitutive activation of non-canonical NF-kappa-B signaling. The target proteins for its E3 ubiquitin-protein ligase activity include: RIPK1, RIPK2, RIPK3, RIPK4, CASP3, CASP7, CASP8, IKBKE, TRAF1, and BCL10. Acts as an important regulator of innate immune signaling via regulation of Toll-like receptors (TLRs), Nodlike receptors (NLRs) and RIG-I like receptors (RLRs), collectively referred to as pattern recognition receptors (PRRs). Protects cells from spontaneous formation of the ripoptosome, a large multi-protein complex that has the capability to kill cancer cells in a caspase-dependent and caspase-independent manner. Suppresses ripoptosome formation by ubiquitinating RIPK1 and CASP8. The polypeptide is Baculoviral IAP repeat-containing protein 3 (Birc3) (Mus musculus (Mouse)).